The chain runs to 624 residues: Phosphoenolpyruvate carboxykinase [GTP] (624 aa).

Substrate-binding positions include R88 and 222–224 (YGG). Positions 231 and 250 each coordinate Mn(2+). Residue S272 participates in substrate binding. 273–278 (MCGKTS) lines the GTP pocket. C274 is a catalytic residue. D291 provides a ligand contact to Mn(2+). 386–388 (NAR) lines the substrate pocket. 2 residues coordinate GTP: R388 and R420.

The protein belongs to the phosphoenolpyruvate carboxykinase [GTP] family. Requires Mn(2+) as cofactor.

It is found in the cytoplasm. The enzyme catalyses oxaloacetate + GTP = phosphoenolpyruvate + GDP + CO2. The protein operates within carbohydrate biosynthesis; gluconeogenesis. Functionally, catalyzes the conversion of oxaloacetate (OAA) to phosphoenolpyruvate (PEP), the rate-limiting step in the metabolic pathway that produces glucose from lactate and other precursors derived from the citric acid cycle. The sequence is that of Phosphoenolpyruvate carboxykinase [GTP] from Pyrococcus furiosus (strain ATCC 43587 / DSM 3638 / JCM 8422 / Vc1).